Here is a 348-residue protein sequence, read N- to C-terminus: Phenylalanine--tRNA ligase alpha subunit (348 aa).

E262 lines the Mg(2+) pocket.

Belongs to the class-II aminoacyl-tRNA synthetase family. Phe-tRNA synthetase alpha subunit type 1 subfamily. Tetramer of two alpha and two beta subunits. The cofactor is Mg(2+).

It localises to the cytoplasm. The catalysed reaction is tRNA(Phe) + L-phenylalanine + ATP = L-phenylalanyl-tRNA(Phe) + AMP + diphosphate + H(+). In Streptococcus pneumoniae (strain 70585), this protein is Phenylalanine--tRNA ligase alpha subunit.